Here is a 342-residue protein sequence, read N- to C-terminus: Renalase (342 aa).

The first 17 residues, 1-17 (MAQVLIVGAGMTGSLCA), serve as a signal peptide directing secretion. Residues T12, R42, and 61–62 (QY) each bind FAD.

It belongs to the renalase family. It depends on FAD as a cofactor. Secreted into the blood by the kidney. Highly expressed in the kidney, expressed at lower level in heart, skeletal muscle and small intestine. Its plasma concentration is markedly reduced in patients with end-stage renal disease, as compared with healthy subjects.

It localises to the secreted. It catalyses the reaction 1,2-dihydro-beta-NAD + O2 + H(+) = H2O2 + NAD(+). The catalysed reaction is 1,2-dihydro-beta-NADP + O2 + H(+) = H2O2 + NADP(+). The enzyme catalyses 1,6-dihydro-beta-NADP + O2 + H(+) = H2O2 + NADP(+). It carries out the reaction 1,6-dihydro-beta-NAD + O2 + H(+) = H2O2 + NAD(+). Functionally, catalyzes the oxidation of the less abundant 1,2-dihydro-beta-NAD(P) and 1,6-dihydro-beta-NAD(P) to form beta-NAD(P)(+). The enzyme hormone is secreted by the kidney, and circulates in blood and modulates cardiac function and systemic blood pressure. Lowers blood pressure in vivo by decreasing cardiac contractility and heart rate and preventing a compensatory increase in peripheral vascular tone, suggesting a causal link to the increased plasma catecholamine and heightened cardiovascular risk. High concentrations of catecholamines activate plasma renalase and promotes its secretion and synthesis. This chain is Renalase (RNLS), found in Homo sapiens (Human).